We begin with the raw amino-acid sequence, 98 residues long: NADH-ubiquinone oxidoreductase chain 4L (98 aa).

3 helical membrane-spanning segments follow: residues 1–21 (MTLI…GLLM), 29–49 (ALLC…LTIL), and 61–81 (IILL…LVMV).

The protein belongs to the complex I subunit 4L family. As to quaternary structure, core subunit of respiratory chain NADH dehydrogenase (Complex I) which is composed of 45 different subunits.

Its subcellular location is the mitochondrion inner membrane. It catalyses the reaction a ubiquinone + NADH + 5 H(+)(in) = a ubiquinol + NAD(+) + 4 H(+)(out). In terms of biological role, core subunit of the mitochondrial membrane respiratory chain NADH dehydrogenase (Complex I) which catalyzes electron transfer from NADH through the respiratory chain, using ubiquinone as an electron acceptor. Part of the enzyme membrane arm which is embedded in the lipid bilayer and involved in proton translocation. The protein is NADH-ubiquinone oxidoreductase chain 4L (MT-ND4L) of Eschrichtius robustus (California gray whale).